We begin with the raw amino-acid sequence, 921 residues long: 2-oxoadipate dehydrogenase complex component E1 (921 aa).

N6-succinyllysine is present on residues lysine 184 and lysine 189. Positions 300–319 (GKTRGRQQSREDGDYSPNGS) are disordered. Residues lysine 801 and lysine 819 each carry the N6-succinyllysine modification.

The protein belongs to the alpha-ketoglutarate dehydrogenase family. The 2-oxoadipate dehydrogenase complex is composed of OADH (2-oxoadipate dehydrogenase; E1a), DLST (dihydrolipoamide succinyltransferase; E2) and DLD (dihydrolipoamide dehydrogenase; E3). E1a functional unit is a dimer. Thiamine diphosphate is required as a cofactor.

The protein resides in the mitochondrion. The enzyme catalyses N(6)-[(R)-lipoyl]-L-lysyl-[protein] + 2-oxoadipate + H(+) = N(6)-[(R)-S(8)-glutaryldihydrolipoyl]-L-lysyl-[protein] + CO2. It functions in the pathway amino-acid degradation. Its function is as follows. 2-oxoadipate dehydrogenase (E1a) component of the 2-oxoadipate dehydrogenase complex (OADHC). Participates in the first step, rate limiting for the overall conversion of 2-oxoadipate (alpha-ketoadipate) to glutaryl-CoA and CO(2) catalyzed by the whole OADHC. Catalyzes the irreversible decarboxylation of 2-oxoadipate via the thiamine diphosphate (ThDP) cofactor and subsequent transfer of the decarboxylated acyl intermediate on an oxidized dihydrolipoyl group that is covalently amidated to the E2 enzyme (dihydrolipoyllysine-residue succinyltransferase or DLST). Can catalyze the decarboxylation of 2-oxoglutarate in vitro, but at a much lower rate than 2-oxoadipate. Responsible for the last step of L-lysine, L-hydroxylysine and L-tryptophan catabolism with the common product being 2-oxoadipate. The polypeptide is 2-oxoadipate dehydrogenase complex component E1 (Dhtkd1) (Mus musculus (Mouse)).